A 248-amino-acid polypeptide reads, in one-letter code: Phosphoribosylaminoimidazole-succinocarboxamide synthase (248 aa).

Belongs to the SAICAR synthetase family.

The catalysed reaction is 5-amino-1-(5-phospho-D-ribosyl)imidazole-4-carboxylate + L-aspartate + ATP = (2S)-2-[5-amino-1-(5-phospho-beta-D-ribosyl)imidazole-4-carboxamido]succinate + ADP + phosphate + 2 H(+). It participates in purine metabolism; IMP biosynthesis via de novo pathway; 5-amino-1-(5-phospho-D-ribosyl)imidazole-4-carboxamide from 5-amino-1-(5-phospho-D-ribosyl)imidazole-4-carboxylate: step 1/2. The protein is Phosphoribosylaminoimidazole-succinocarboxamide synthase (purC) of Methanothermobacter thermautotrophicus (strain ATCC 29096 / DSM 1053 / JCM 10044 / NBRC 100330 / Delta H) (Methanobacterium thermoautotrophicum).